An 811-amino-acid chain; its full sequence is Zinc finger CCCH domain-containing protein 11A (811 aa).

3 C3H1-type zinc fingers span residues 2 to 30 (PNQG…HCEA), 32 to 58 (LGNE…HMEI), and 61 to 87 (KRSE…HHNR). S109 bears the Phosphoserine mark. Glycyl lysine isopeptide (Lys-Gly) (interchain with G-Cter in SUMO2) cross-links involve residues K115 and K125. A Phosphoserine modification is found at S133. Disordered stretches follow at residues 140 to 195 (MKVE…GLRV), 224 to 258 (KKMK…KENV), 286 to 352 (GKRK…EKVN), and 368 to 434 (ERAS…TCIK). Residue K141 forms a Glycyl lysine isopeptide (Lys-Gly) (interchain with G-Cter in SUMO2) linkage. Phosphoserine occurs at positions 150 and 172. The segment covering 161–176 (ADDDEDDDDQFSEEGD) has biased composition (acidic residues). S291 carries the post-translational modification Phosphoserine. 2 stretches are compositionally biased toward basic and acidic residues: residues 310 to 323 (KKVE…DKTP) and 368 to 391 (ERAS…KTDD). T322 carries the phosphothreonine modification. Residues 363–424 (EEILLERASQ…KHRQQEAERQ (62 aa)) are a coiled coil. A Phosphoserine modification is found at S371. Over residues 392-403 (STSGARSSSTIR) the composition is skewed to polar residues. The span at 418-434 (QQEAERQKSKKDTTCIK) shows a compositional bias: basic and acidic residues. K479 participates in a covalent cross-link: Glycyl lysine isopeptide (Lys-Gly) (interchain with G-Cter in SUMO2). The tract at residues 483 to 550 (ALRVQQSSES…KEASGETTGV (68 aa)) is disordered. Low complexity predominate over residues 487-499 (QQSSESSTSSPSQ). A Glycyl lysine isopeptide (Lys-Gly) (interchain with G-Cter in SUMO2) cross-link involves residue K620. The tract at residues 716–769 (TVPEAENPRDSLVLPPTQSSSDSSPPEVSGPSSSQMSMKTRRLSSASTGKPQLS) is disordered. The segment covering 730-749 (PPTQSSSDSSPPEVSGPSSS) has biased composition (low complexity). Residues 750-766 (QMSMKTRRLSSASTGKP) show a composition bias toward polar residues.

As to quaternary structure, interacts with TREX complex components THOC2, DDX39 and POLDIP3; the interactions are ATP-dependent. Interacts with PABPN1; this interaction retains ZC3H11A in nuclear speckles. Interacts with KPNA3.

Its subcellular location is the nucleus speckle. Its function is as follows. Through its association with TREX complex components, may participate in the export and post-transcriptional coordination of selected mRNA transcripts, including those required to maintain the metabolic processes in embryonic cells. Binds RNA. The sequence is that of Zinc finger CCCH domain-containing protein 11A (ZC3H11A) from Pongo abelii (Sumatran orangutan).